A 398-amino-acid polypeptide reads, in one-letter code: MSKTIAINAGSSSLKWQLYQMPEEEVLAQGIIERIGLKDSISTVKYDGKKEEQILDIHDHTEAVKILLNDLIHFGIIAAYDEITGVGHRVVAGGELFKESVVVNDKVLEHIEELSVLAPLHNPGAAAGIRAFRDILPDITSVCVFDTSFHTSMAKHTYLYPIPQKYYTDYKVRKYGAHGTSHKYVAQEAAKMLGRPLEELKLITAHIGNGVSITANYHGKSVDTSMGFTPLAGPMMGTRSGDIDPAIIPYLIEQDPELKDAADVVNMLNKKSGLSGVSGISSDMRDIEAGLQEDNPDAVLAYNIFIDRIKKCIGQYFAVLNGADALVFTAGMGENAPLMRQDVIGGLTWFGMDIDPEKNVFGYRGDISTPESKVKVLVISTDEELCIARDVERLKNTK.

Position 8 (asparagine 8) interacts with Mg(2+). Residue lysine 15 participates in ATP binding. A substrate-binding site is contributed by arginine 89. The active-site Proton donor/acceptor is the aspartate 146. ATP-binding positions include histidine 206–glycine 210, aspartate 283–arginine 285, and glycine 331–asparagine 335. Glutamate 383 provides a ligand contact to Mg(2+).

Belongs to the acetokinase family. In terms of assembly, homodimer. The cofactor is Mg(2+). Mn(2+) serves as cofactor.

The protein resides in the cytoplasm. The catalysed reaction is acetate + ATP = acetyl phosphate + ADP. The protein operates within metabolic intermediate biosynthesis; acetyl-CoA biosynthesis; acetyl-CoA from acetate: step 1/2. Functionally, catalyzes the formation of acetyl phosphate from acetate and ATP. Can also catalyze the reverse reaction. This is Acetate kinase from Streptococcus pyogenes serotype M6 (strain ATCC BAA-946 / MGAS10394).